We begin with the raw amino-acid sequence, 192 residues long: Putative molybdenum cofactor guanylyltransferase (192 aa).

GTP-binding positions include 8–10, Lys21, Asp67, and Asp101; that span reads LAG. Mg(2+) is bound at residue Asp101.

This sequence belongs to the MobA family. Monomer. Mg(2+) is required as a cofactor.

It is found in the cytoplasm. The catalysed reaction is Mo-molybdopterin + GTP + H(+) = Mo-molybdopterin guanine dinucleotide + diphosphate. Transfers a GMP moiety from GTP to Mo-molybdopterin (Mo-MPT) cofactor (Moco or molybdenum cofactor) to form Mo-molybdopterin guanine dinucleotide (Mo-MGD) cofactor. This chain is Putative molybdenum cofactor guanylyltransferase, found in Neisseria meningitidis serogroup B (strain ATCC BAA-335 / MC58).